The following is a 465-amino-acid chain: Mitochondrial distribution and morphology protein 10 (465 aa).

It belongs to the MDM10 family. As to quaternary structure, component of the ER-mitochondria encounter structure (ERMES) or MDM complex, composed of MMM1, MDM10, MDM12 and MDM34. Associates with the mitochondrial outer membrane sorting assembly machinery SAM(core) complex.

Its subcellular location is the mitochondrion outer membrane. Component of the ERMES/MDM complex, which serves as a molecular tether to connect the endoplasmic reticulum and mitochondria. Components of this complex are involved in the control of mitochondrial shape and protein biogenesis and may function in phospholipid exchange. MDM10 is involved in the late assembly steps of the general translocase of the mitochondrial outer membrane (TOM complex). Functions in the TOM40-specific route of the assembly of outer membrane beta-barrel proteins, including the association of TOM40 with the receptor TOM22 and small TOM proteins. Can associate with the SAM(core) complex as well as the MDM12-MMM1 complex, both involved in late steps of the major beta-barrel assembly pathway, that is responsible for biogenesis of all outer membrane beta-barrel proteins. May act as a switch that shuttles between both complexes and channels precursor proteins into the TOM40-specific pathway. Plays a role in mitochondrial morphology and in the inheritance of mitochondria. The polypeptide is Mitochondrial distribution and morphology protein 10 (Eremothecium gossypii (strain ATCC 10895 / CBS 109.51 / FGSC 9923 / NRRL Y-1056) (Yeast)).